Consider the following 517-residue polypeptide: Superoxide-generating NADPH oxidase heavy chain subunit A (517 aa).

The Cytoplasmic segment spans residues 1–19 (MRLPTKEEIQRYWVNEGNK). The helical transmembrane segment at 20–40 (LILVILYTLGNIAAFVYTFVH) threads the bilayer. The Extracellular portion of the chain corresponds to 41-62 (YYNSPAFEVVGYGVCFARGCAQ). The Ferric oxidoreductase domain maps to 58 to 201 (RGCAQLLKLN…LFVVFFGLLV (144 aa)). A helical membrane pass occupies residues 63 to 83 (LLKLNCALILVPVLRNLLSFL). Topologically, residues 84–97 (RGTFLNNYVPFDKN) are cytoplasmic. A helical membrane pass occupies residues 98–118 (IVFHKLIAWVICFATFGHVMA). Positions 101 and 115 each coordinate heme. At 119–149 (HFNNFRLYQDITPQEYKRILGIDYPNLTPIK) the chain is on the extracellular side. The helical transmembrane segment at 150-170 (YAFATLAGWTGHVVCIVMVLM) threads the bilayer. The Cytoplasmic segment spans residues 171–184 (YTSAVESIRRPMFE). Residues 185–205 (GFWYTHHLFVVFFGLLVVHGL) form a helical membrane-spanning segment. Heme contacts are provided by His190 and His203. His206 is a topological domain (extracellular). Residues 207 to 227 (SILEPTSFWKWVIGPCALYIV) traverse the membrane as a helical segment. Over 228-517 (ERLIRLLRSK…CRFHYNKENF (290 aa)) the chain is Cytoplasmic. The FAD-binding FR-type domain occupies 229–349 (RLIRLLRSKK…DGPFGAASEE (121 aa)). Residue 283-289 (HPFTITS) coordinates FAD.

In terms of assembly, composed of a heavy chain and a light chain. It depends on FAD as a cofactor.

Its subcellular location is the membrane. Functionally, critical component of the membrane-bound oxidase that generates superoxide. It is the terminal component of a respiratory chain that transfers single electrons from cytoplasmic NADPH across the plasma membrane to molecular oxygen on the exterior. The polypeptide is Superoxide-generating NADPH oxidase heavy chain subunit A (noxA) (Dictyostelium discoideum (Social amoeba)).